Consider the following 247-residue polypeptide: RNA polymerase sigma factor FliA (247 aa).

A sigma-70 factor domain-2 region spans residues 22–94; that stretch reads LIQRYAPLVK…MLDEVRKGDW (73 aa). Residues 49–52 carry the Interaction with polymerase core subunit RpoC motif; sequence DLMQ. A sigma-70 factor domain-3 region spans residues 102 to 171; it reads NTRMVTDAIR…GLPEDTSLSH (70 aa). The tract at residues 190–238 is sigma-70 factor domain-4; that stretch reads AIAKLPERERLVLALYYDEELNLKEIGEVLGVSESRVSQLHSQCAARLR. Residues 212 to 231 constitute a DNA-binding region (H-T-H motif); sequence LKEIGEVLGVSESRVSQLHS.

Belongs to the sigma-70 factor family. FliA subfamily.

Its subcellular location is the cytoplasm. Sigma factors are initiation factors that promote the attachment of RNA polymerase to specific initiation sites and are then released. This sigma factor controls the expression of flagella-related genes. Required for the flagellin gene (fliC) expression. In Pseudomonas aeruginosa (strain ATCC 15692 / DSM 22644 / CIP 104116 / JCM 14847 / LMG 12228 / 1C / PRS 101 / PAO1), this protein is RNA polymerase sigma factor FliA.